We begin with the raw amino-acid sequence, 362 residues long: Serine/threonine-protein kinase-like protein At3g51990 (362 aa).

The first 24 residues, 1-24, serve as a signal peptide directing secretion; that stretch reads MGYLSCKAGSAVAIAVSSAASTSG. Positions 21–32 are enriched in low complexity; the sequence is STSGSTSSKASA. The disordered stretch occupies residues 21–43; it reads STSGSTSSKASAPPESPIEDRPR. The Protein kinase domain maps to 59-329; sequence FDINNLLGRG…PGMEEVVGWL (271 aa). ATP is bound by residues 65 to 73 and Lys-86; that span reads LGRGSHGSV. N-linked (GlcNAc...) asparagine glycosylation is present at Asn-136. The active-site Proton acceptor is the Asp-185. Phosphoserine is present on Ser-219. 2 positions are modified to phosphothreonine: Thr-220 and Thr-225. Phosphotyrosine is present on Tyr-233.

The protein belongs to the protein kinase superfamily. Ser/Thr protein kinase family.

The protein localises to the secreted. It catalyses the reaction L-seryl-[protein] + ATP = O-phospho-L-seryl-[protein] + ADP + H(+). The catalysed reaction is L-threonyl-[protein] + ATP = O-phospho-L-threonyl-[protein] + ADP + H(+). The polypeptide is Serine/threonine-protein kinase-like protein At3g51990 (Arabidopsis thaliana (Mouse-ear cress)).